The chain runs to 548 residues: Synaptic vesicle 2-related protein (548 aa).

Topologically, residues 1 to 87 are cytoplasmic; that stretch reads MEEDLFQLRQ…GFGKFQWKLS (87 aa). Phosphoserine occurs at positions 25 and 31. A helical transmembrane segment spans residues 88–108; the sequence is VLTGLAWMADAMEMMILSILA. The Vesicular portion of the chain corresponds to 109 to 122; that stretch reads PQLHCEWRLPSWQV. The helical transmembrane segment at 123 to 143 threads the bilayer; that stretch reads ALLTSVVFVGMMSSSTLWGNI. Residues 144–156 are Cytoplasmic-facing; it reads SDQYGRKTGLKIS. Residues 157-177 traverse the membrane as a helical segment; sequence VLWTLYYGILSAFAPVYSWIL. Residues 178–180 are Vesicular-facing; sequence VLR. The helical transmembrane segment at 181–201 threads the bilayer; that stretch reads GLVGFGIGGVPQSVTLYAEFL. Over 202–209 the chain is Cytoplasmic; that stretch reads PMKARAKC. The helical transmembrane segment at 210–230 threads the bilayer; it reads ILLIEVFWAIGTVFEVVLAVF. Residues 231-238 lie on the Vesicular side of the membrane; the sequence is VMPSLGWR. The helical transmembrane segment at 239–259 threads the bilayer; sequence WLLILSAVPLLLFAVLCFWLP. Residues 260–316 are Cytoplasmic-facing; the sequence is ESARYDVLSGNQEKAIATLKRIATENGAPMPLGKLIISRQEDRGKMRDLFTPHFRWT. The chain crosses the membrane as a helical span at residues 317–337; it reads TLLLWFIWFSNAFSYYGLVLL. The Vesicular segment spans residues 338 to 373; sequence TTELFQAGDVCSISSRKKAVEAKCSLACEYLSEEDY. Residues 374–394 form a helical membrane-spanning segment; that stretch reads MDLLWTTLSEFPGVLVTLWII. Residues 395–401 are Cytoplasmic-facing; sequence DRLGRKK. The chain crosses the membrane as a helical span at residues 402–422; sequence TMALCFVVFSFCSLLLFICVG. The Vesicular segment spans residues 423 to 425; that stretch reads RNM. A helical transmembrane segment spans residues 426 to 446; the sequence is LTLLLFIARAFISGGFQAAYV. Residues 447 to 457 lie on the Cytoplasmic side of the membrane; sequence YTPEVYPTATR. Residues 458-478 form a helical membrane-spanning segment; it reads ALGLGTCSGMARVGALITPFI. The Vesicular portion of the chain corresponds to 479 to 489; it reads AQVMLESSVYL. The helical transmembrane segment at 490 to 510 threads the bilayer; sequence TLAVYSGCCLLAALASCFLPI. Topologically, residues 511–548 are cytoplasmic; that stretch reads ETKGRGLQESSHREWGQEMVGRGAHGTGVARSNSGSQE. The tract at residues 528–548 is disordered; that stretch reads EMVGRGAHGTGVARSNSGSQE. Ser-542 carries the phosphoserine modification.

The protein belongs to the major facilitator superfamily. Detected in brain and adrenal medulla.

It localises to the cytoplasmic vesicle. The protein localises to the secretory vesicle. The protein resides in the synaptic vesicle membrane. The chain is Synaptic vesicle 2-related protein (SVOP) from Bos taurus (Bovine).